A 432-amino-acid polypeptide reads, in one-letter code: Succinate--CoA ligase [GDP-forming] subunit beta, mitochondrial (432 aa).

Residues 1-37 (MASPVAAQAGKLLRALALRPRFLAAGSQAVQLTSRRW) constitute a mitochondrion transit peptide. The region spanning 46 to 274 (KKLMSDNGVR…NAEFRQKDIF (229 aa)) is the ATP-grasp domain. Gln-57 contributes to the GTP binding site. The residue at position 73 (Lys-73) is an N6-acetyllysine. Lys-78 is modified (N6-succinyllysine). 90–92 (GRG) provides a ligand contact to GTP. Residues Lys-132 and Lys-139 each carry the N6-acetyllysine modification. Position 146 (Leu-146) interacts with GTP. Ser-161 bears the Phosphoserine mark. N6-acetyllysine occurs at positions 200, 218, and 227. Residues Asn-243 and Asp-257 each contribute to the Mg(2+) site. N6-acetyllysine is present on residues Lys-271 and Lys-291. Asn-308 contacts substrate. Position 338 is an N6-succinyllysine (Lys-338). Residue Lys-347 is modified to N6-acetyllysine. Residue 365-367 (GIV) participates in substrate binding. Residues Lys-386 and Lys-423 each carry the N6-acetyllysine modification.

Belongs to the succinate/malate CoA ligase beta subunit family. GTP-specific subunit beta subfamily. Heterodimer of an alpha and a beta subunit. The beta subunit determines specificity for GTP. It depends on Mg(2+) as a cofactor. In terms of tissue distribution, mainly expressed in liver, kidney, heart, spleen and skeletal muscle. Also found in intestine and colon, and in low amounts in lung, brain, prostate, testis and ovary.

The protein localises to the mitochondrion. The catalysed reaction is GTP + succinate + CoA = succinyl-CoA + GDP + phosphate. It participates in carbohydrate metabolism; tricarboxylic acid cycle; succinate from succinyl-CoA (ligase route): step 1/1. Its function is as follows. GTP-specific succinyl-CoA synthetase functions in the citric acid cycle (TCA), coupling the hydrolysis of succinyl-CoA to the synthesis of GTP and thus represents the only step of substrate-level phosphorylation in the TCA. The beta subunit provides nucleotide specificity of the enzyme and binds the substrate succinate, while the binding sites for coenzyme A and phosphate are found in the alpha subunit. The protein is Succinate--CoA ligase [GDP-forming] subunit beta, mitochondrial of Homo sapiens (Human).